A 293-amino-acid polypeptide reads, in one-letter code: Nucleotide-binding protein BC_5156 (293 aa).

ATP is bound at residue 14–21 (GMSGAGKT). A GTP-binding site is contributed by 65–68 (DLRG).

The protein belongs to the RapZ-like family.

Displays ATPase and GTPase activities. This chain is Nucleotide-binding protein BC_5156, found in Bacillus cereus (strain ATCC 14579 / DSM 31 / CCUG 7414 / JCM 2152 / NBRC 15305 / NCIMB 9373 / NCTC 2599 / NRRL B-3711).